The primary structure comprises 690 residues: DNA topoisomerase 1 (690 aa).

Positions 3–121 (DYLVIVESPA…EITKQAIKDA (119 aa)) constitute a Toprim domain. E9 and D82 together coordinate Mg(2+). Residues 129–558 (NMDLVDAQQA…DFYKGFEERL (430 aa)) enclose the Topo IA-type catalytic domain. The interval 163–168 (SAGRVQ) is interaction with DNA. The active-site O-(5'-phospho-DNA)-tyrosine intermediate is the Y298. The disordered stretch occupies residues 329–354 (NGTKAVKKDKKSQDAHEAIRPTSVER). The segment covering 339 to 354 (KSQDAHEAIRPTSVER) has biased composition (basic and acidic residues). 3 C4-type zinc fingers span residues 579-605 (CEKCGHEMVYKMGRYGKFMACSNFPDC), 619-647 (CPKCEKGEIVERKSKKRRVFYGCNQYPEC), and 660-683 (CPKCSSYLVEKRTKKQVQVQCSSC).

It belongs to the type IA topoisomerase family. In terms of assembly, monomer. It depends on Mg(2+) as a cofactor.

The catalysed reaction is ATP-independent breakage of single-stranded DNA, followed by passage and rejoining.. Its function is as follows. Releases the supercoiling and torsional tension of DNA, which is introduced during the DNA replication and transcription, by transiently cleaving and rejoining one strand of the DNA duplex. Introduces a single-strand break via transesterification at a target site in duplex DNA. The scissile phosphodiester is attacked by the catalytic tyrosine of the enzyme, resulting in the formation of a DNA-(5'-phosphotyrosyl)-enzyme intermediate and the expulsion of a 3'-OH DNA strand. The free DNA strand then undergoes passage around the unbroken strand, thus removing DNA supercoils. Finally, in the religation step, the DNA 3'-OH attacks the covalent intermediate to expel the active-site tyrosine and restore the DNA phosphodiester backbone. The polypeptide is DNA topoisomerase 1 (Halalkalibacterium halodurans (strain ATCC BAA-125 / DSM 18197 / FERM 7344 / JCM 9153 / C-125) (Bacillus halodurans)).